A 66-amino-acid polypeptide reads, in one-letter code: U-limacoditoxin(59)-Dv128 (66 aa).

The signal sequence occupies residues 1–20 (MRHLLVLLLICLSVIAMAQA). Residues 21–66 (TFGGGLGGAVGGRRRRDIGGGLGGAVGGRRRRDIGGGLGGAVGGKS) are 3 X 16 AA tandem repeats of [FI]-G-G-G-L-G-G-A-V-G-G-R-R-R-R-D. Repeat copies occupy residues 22-37 (FGGGLGGAVGGRRRRD) and 38-53 (IGGGLGGAVGGRRRRD). The residue at position 31 (Gly-31) is a Glycine amide. The propeptide occupies 33–37 (RRRRD). Gly-47 carries the post-translational modification Glycine amide. Positions 49-53 (RRRRD) are excised as a propeptide. The 3; half-length repeat unit spans residues 54–64 (IGGGLGGAVGG).

Belongs to the limacoditoxin-59 family. As to expression, expressed by the venom secretory cell of the spine. The spine is a cuticular structure containing a single large nucleated venom-secreting cell at its base. It is an independent unit capable of producing, storing and injecting venom. On the back of D.vulnerans caterpillars, spines are grouped together by 50 to 100 to form scoli, of which there are eight in D.vulnerans.

Its subcellular location is the secreted. Functionally, probable toxin. This chain is U-limacoditoxin(59)-Dv128, found in Doratifera vulnerans (Mottled cup moth).